A 464-amino-acid polypeptide reads, in one-letter code: NADH dehydrogenase [ubiquinone] flavoprotein 1, mitochondrial (464 aa).

A mitochondrion-targeting transit peptide spans 1 to 20 (MLAARRLLGGSLPSRVSVRF). Lys81 is modified (N6-acetyllysine; alternate). Lys81 is subject to N6-succinyllysine; alternate. 87 to 96 (GRGGAGFPTG) is an NADH binding site. An N6-acetyllysine modification is found at Lys104. FMN is bound at residue 199-247 (RGAGAYICGEETALIESIEGKQGKPRLKPPFPADVGVFGCPTTVANVET). At Arg257 the chain carries Omega-N-methylarginine. Lys375 carries the post-translational modification N6-acetyllysine. 4 residues coordinate [4Fe-4S] cluster: Cys379, Cys382, Cys385, and Cys425.

Belongs to the complex I 51 kDa subunit family. As to quaternary structure, core subunit of respiratory chain NADH dehydrogenase (Complex I) which is composed of 45 different subunits. This is a component of the flavoprotein-sulfur (FP) fragment of the enzyme. Interacts with RAB5IF. FMN is required as a cofactor. The cofactor is [4Fe-4S] cluster.

Its subcellular location is the mitochondrion inner membrane. It carries out the reaction a ubiquinone + NADH + 5 H(+)(in) = a ubiquinol + NAD(+) + 4 H(+)(out). In terms of biological role, core subunit of the mitochondrial membrane respiratory chain NADH dehydrogenase (Complex I) which catalyzes electron transfer from NADH through the respiratory chain, using ubiquinone as an electron acceptor. Part of the peripheral arm of the enzyme, where the electrons from NADH are accepted by flavin mononucleotide (FMN) and then passed along a chain of iron-sulfur clusters by electron tunnelling to the final acceptor ubiquinone. Contains FMN, which is the initial electron acceptor as well as one iron-sulfur cluster. The sequence is that of NADH dehydrogenase [ubiquinone] flavoprotein 1, mitochondrial from Macaca fascicularis (Crab-eating macaque).